Reading from the N-terminus, the 126-residue chain is Small ribosomal subunit protein uS8 (126 aa).

The protein belongs to the universal ribosomal protein uS8 family. In terms of assembly, part of the 30S ribosomal subunit. Contacts proteins S5 and S12.

In terms of biological role, one of the primary rRNA binding proteins, it binds directly to 16S rRNA central domain where it helps coordinate assembly of the platform of the 30S subunit. This chain is Small ribosomal subunit protein uS8, found in Oleidesulfovibrio alaskensis (strain ATCC BAA-1058 / DSM 17464 / G20) (Desulfovibrio alaskensis).